The sequence spans 267 residues: Dihydropteroate synthase (267 aa).

In terms of domain architecture, Pterin-binding spans 1–251; sequence MTKTKIMGIL…NVELNAKLAK (251 aa). Asn-11 provides a ligand contact to Mg(2+). (7,8-dihydropterin-6-yl)methyl diphosphate-binding positions include Thr-51, Asp-84, Asn-103, Asp-167, Lys-203, and 239–241; that span reads RVH.

The protein belongs to the DHPS family. In terms of assembly, homodimer. The cofactor is Mg(2+).

It catalyses the reaction (7,8-dihydropterin-6-yl)methyl diphosphate + 4-aminobenzoate = 7,8-dihydropteroate + diphosphate. It functions in the pathway cofactor biosynthesis; tetrahydrofolate biosynthesis; 7,8-dihydrofolate from 2-amino-4-hydroxy-6-hydroxymethyl-7,8-dihydropteridine diphosphate and 4-aminobenzoate: step 1/2. Catalyzes the condensation of para-aminobenzoate (pABA) with 6-hydroxymethyl-7,8-dihydropterin diphosphate (DHPt-PP) to form 7,8-dihydropteroate (H2Pte), the immediate precursor of folate derivatives. The polypeptide is Dihydropteroate synthase (folP) (Staphylococcus aureus (strain MSSA476)).